A 216-amino-acid chain; its full sequence is MGKKINPLGFRLGANQSHRSLWFAQPKSYSRGLQEDEKIRDCIKNYVQKNMRSGSEGISHIEIKKKIDLIQVIIYIGFPNLLIEGRTRGIEELRINVQKGFRSVNRRLNIAITRVAKPYGQPNILAEYIALQLKNRVSFRKAMKKAIELTEQADTKGIQVQIAGRIDGKEIARVEWIREGRVPLQTIRAKIDHCSYTVRTIYGVLGIKIWIFVDEQ.

Positions isoleucine 43–alanine 116 constitute a KH type-2 domain.

Belongs to the universal ribosomal protein uS3 family. Part of the 30S ribosomal subunit.

The protein resides in the plastid. It is found in the chloroplast. This is Small ribosomal subunit protein uS3c (rps3) from Drimys granadensis.